Consider the following 201-residue polypeptide: Large ribosomal subunit protein uL4 (201 aa).

The segment at 44–68 is disordered; that stretch reads RAQKSRAEVSGSGRKPWRQKGTGRA.

The protein belongs to the universal ribosomal protein uL4 family. In terms of assembly, part of the 50S ribosomal subunit.

One of the primary rRNA binding proteins, this protein initially binds near the 5'-end of the 23S rRNA. It is important during the early stages of 50S assembly. It makes multiple contacts with different domains of the 23S rRNA in the assembled 50S subunit and ribosome. In terms of biological role, forms part of the polypeptide exit tunnel. The protein is Large ribosomal subunit protein uL4 of Buchnera aphidicola subsp. Acyrthosiphon pisum (strain 5A).